A 378-amino-acid chain; its full sequence is Erythronate-4-phosphate dehydrogenase (378 aa).

Substrate contacts are provided by serine 45 and threonine 66. 2 residues coordinate NAD(+): aspartate 146 and threonine 175. Arginine 208 is a catalytic residue. Aspartate 232 contributes to the NAD(+) binding site. Glutamate 237 is a catalytic residue. Catalysis depends on histidine 254, which acts as the Proton donor. Residue glycine 257 coordinates NAD(+). Substrate is bound at residue tyrosine 258.

Belongs to the D-isomer specific 2-hydroxyacid dehydrogenase family. PdxB subfamily. In terms of assembly, homodimer.

The protein resides in the cytoplasm. It carries out the reaction 4-phospho-D-erythronate + NAD(+) = (R)-3-hydroxy-2-oxo-4-phosphooxybutanoate + NADH + H(+). It participates in cofactor biosynthesis; pyridoxine 5'-phosphate biosynthesis; pyridoxine 5'-phosphate from D-erythrose 4-phosphate: step 2/5. Catalyzes the oxidation of erythronate-4-phosphate to 3-hydroxy-2-oxo-4-phosphonooxybutanoate. The chain is Erythronate-4-phosphate dehydrogenase from Escherichia coli O17:K52:H18 (strain UMN026 / ExPEC).